The following is a 65-amino-acid chain: Large ribosomal subunit protein bL35 (65 aa).

Belongs to the bacterial ribosomal protein bL35 family.

The chain is Large ribosomal subunit protein bL35 from Thermoanaerobacter pseudethanolicus (strain ATCC 33223 / 39E) (Clostridium thermohydrosulfuricum).